Consider the following 23-residue polypeptide: Acidic phospholipase A2 Ts-A2 (23 aa).

Ca(2+) is required as a cofactor. In terms of processing, contains 7 disulfide bonds. In terms of tissue distribution, expressed by the venom gland.

The protein localises to the secreted. It catalyses the reaction a 1,2-diacyl-sn-glycero-3-phosphocholine + H2O = a 1-acyl-sn-glycero-3-phosphocholine + a fatty acid + H(+). In terms of biological role, exhibits moderate hydrolytic activities and prefers the anionic micelles (dPPC with deoxycholate) to the zwitterionic micelles (dPPC with Triton X-100). PLA2 catalyzes the calcium-dependent hydrolysis of the 2-acyl groups in 3-sn-phosphoglycerides. In Trimeresurus stejnegeri (Chinese green tree viper), this protein is Acidic phospholipase A2 Ts-A2.